Consider the following 321-residue polypeptide: Quinol oxidase subunit 2 (321 aa).

Residues 1–25 form the signal peptide; sequence MIFLFRALKPLLVLALLTVVFVLGG. Cys-26 is lipidated: N-palmitoyl cysteine. A lipid anchor (S-diacylglycerol cysteine) is attached at Cys-26. 2 consecutive transmembrane segments (helical) span residues 49–69 and 90–110; these read SIGF…IILV and TFLE…LSVP. A disordered region spans residues 294-321; the sequence is QAVSPHSKTDPFENVKKNEFKKSDDTEE. Residues 300 to 321 are compositionally biased toward basic and acidic residues; it reads SKTDPFENVKKNEFKKSDDTEE.

This sequence belongs to the cytochrome c oxidase subunit 2 family. As to quaternary structure, interacts with FloT.

The protein resides in the cell membrane. It localises to the membrane raft. It carries out the reaction 2 a quinol + O2 = 2 a quinone + 2 H2O. Functionally, catalyzes quinol oxidation with the concomitant reduction of oxygen to water. Major component for energy conversion during vegetative growth. Subunit II transfers the electrons from a quinol to the binuclear center of the catalytic subunit I. The chain is Quinol oxidase subunit 2 (qoxA) from Bacillus subtilis (strain 168).